Consider the following 360-residue polypeptide: Peptide chain release factor 1 (360 aa).

The residue at position 237 (Q237) is an N5-methylglutamine.

It belongs to the prokaryotic/mitochondrial release factor family. Post-translationally, methylated by PrmC. Methylation increases the termination efficiency of RF1.

The protein resides in the cytoplasm. Peptide chain release factor 1 directs the termination of translation in response to the peptide chain termination codons UAG and UAA. The chain is Peptide chain release factor 1 from Pseudomonas entomophila (strain L48).